A 289-amino-acid polypeptide reads, in one-letter code: 2-dehydro-3-deoxyphosphooctonate aldolase (289 aa).

This sequence belongs to the KdsA family.

It is found in the cytoplasm. The catalysed reaction is D-arabinose 5-phosphate + phosphoenolpyruvate + H2O = 3-deoxy-alpha-D-manno-2-octulosonate-8-phosphate + phosphate. Its pathway is carbohydrate biosynthesis; 3-deoxy-D-manno-octulosonate biosynthesis; 3-deoxy-D-manno-octulosonate from D-ribulose 5-phosphate: step 2/3. The protein operates within bacterial outer membrane biogenesis; lipopolysaccharide biosynthesis. This is 2-dehydro-3-deoxyphosphooctonate aldolase from Cupriavidus necator (strain ATCC 17699 / DSM 428 / KCTC 22496 / NCIMB 10442 / H16 / Stanier 337) (Ralstonia eutropha).